Consider the following 313-residue polypeptide: tRNA-cytidine(32) 2-sulfurtransferase (313 aa).

The PP-loop motif signature appears at 50–55 (SGGKDS). Residues C125, C128, and C216 each contribute to the [4Fe-4S] cluster site.

The protein belongs to the TtcA family. As to quaternary structure, homodimer. Requires Mg(2+) as cofactor. The cofactor is [4Fe-4S] cluster.

It is found in the cytoplasm. The enzyme catalyses cytidine(32) in tRNA + S-sulfanyl-L-cysteinyl-[cysteine desulfurase] + AH2 + ATP = 2-thiocytidine(32) in tRNA + L-cysteinyl-[cysteine desulfurase] + A + AMP + diphosphate + H(+). It functions in the pathway tRNA modification. Functionally, catalyzes the ATP-dependent 2-thiolation of cytidine in position 32 of tRNA, to form 2-thiocytidine (s(2)C32). The sulfur atoms are provided by the cysteine/cysteine desulfurase (IscS) system. In Haemophilus influenzae (strain ATCC 51907 / DSM 11121 / KW20 / Rd), this protein is tRNA-cytidine(32) 2-sulfurtransferase.